The chain runs to 603 residues: MSAAVTAGKLARAPADPGKAGVPGVAAPGAPAAAPPAKEIPEVLVDPRSRRRYVRGRFLGKGGFAKCFEISDADTKEVFAGKIVPKSLLLKPHQREKMSMEISIHRSLAHQHVVGFHGFFEDNDFVFVVLELCRRRSLLELHKRRKALTEPEARYYLRQIVLGCQYLHRNRVIHRDLKLGNLFLNEDLEVKIGDFGLATKVEYDGERKKTLCGTPNYIAPEVLSKKGHSFEVDVWSIGCIMYTLLVGKPPFETSCLKETYLRIKKNEYSIPKHINPVAASLIQKMLQTDPTARPTINELLNDEFFTSGYIPARLPITCLTIPPRFSIAPSSLDPSNRKPLTVLNKGLENPLPERPREKEEPVVRETGEVVDCHLSDMLQQLHSVNASKPSERGLVRQEEAEDPACIPIFWVSKWVDYSDKYGLGYQLCDNSVGVLFNDSTRLILYNDGDSLQYIERDGTESYLTVSSHPNSLMKKITLLKYFRNYMSEHLLKAGANITPREGDELARLPYLRTWFRTRSAIILHLSNGSVQINFFQDHTKLILCPLMAAVTYIDEKRDFRTYRLSLLEEYGCCKELASRLRYARTMVDKLLSSRSASNRLKAS.

Residues 1-35 (MSAAVTAGKLARAPADPGKAGVPGVAAPGAPAAAP) form a disordered region. Serine 2 carries the post-translational modification N-acetylserine. Position 6 is a phosphothreonine (threonine 6). Residues 13 to 35 (APADPGKAGVPGVAAPGAPAAAP) show a composition bias toward low complexity. A Glycyl lysine isopeptide (Lys-Gly) (interchain with G-Cter in ubiquitin) cross-link involves residue lysine 19. In terms of domain architecture, Protein kinase spans 53 to 305 (YVRGRFLGKG…INELLNDEFF (253 aa)). ATP is bound by residues 59 to 67 (LGKGGFAKC) and lysine 82. Serine 103 bears the Phosphoserine mark. ATP is bound at residue glutamate 131. Position 137 is a phosphoserine (serine 137). Aspartate 176 functions as the Proton acceptor in the catalytic mechanism. ATP is bound by residues 178-181 (KLGN) and aspartate 194. Residues 194-221 (DFGLATKVEYDGERKKTLCGTPNYIAPE) form an activation loop region. Threonine 210 carries the phosphothreonine; by AURKA modification. A Phosphothreonine modification is found at threonine 214. The residue at position 269 (serine 269) is a Phosphoserine; by autocatalysis. At serine 335 the chain carries Phosphoserine. Residues 337-340 (RKPL) carry the D-box that targets the protein for proteasomal degradation in anaphase motif. Lysine 338 participates in a covalent cross-link: Glycyl lysine isopeptide (Lys-Gly) (interchain with G-Cter in SUMO2). The interval 338–364 (KPLTVLNKGLENPLPERPREKEEPVVR) is disordered. Positions 351–364 (LPERPREKEEPVVR) are enriched in basic and acidic residues. Phosphoserine occurs at positions 375 and 450. In terms of domain architecture, POLO box 1 spans 410-488 (WVSKWVDYSD…LKYFRNYMSE (79 aa)). Lysine 492 participates in a covalent cross-link: Glycyl lysine isopeptide (Lys-Gly) (interchain with G-Cter in ubiquitin). Residues 493-507 (AGANITPREGDELAR) are linker. Threonine 498 carries the phosphothreonine modification. One can recognise a POLO box 2 domain in the interval 510-592 (YLRTWFRTRS…ARTMVDKLLS (83 aa)). Positions 538 to 540 (HTK) are important for interaction with phosphorylated proteins.

It belongs to the protein kinase superfamily. Ser/Thr protein kinase family. CDC5/Polo subfamily. In terms of assembly, interacts with CEP170. Interacts with EVI5. Interacts with FAM29A. Interacts with SLX4/BTBD12. Interacts with TTDN1. Interacts (via POLO-box domain) with the phosphorylated form of BUB1, CDC25C and CENPU. Interacts with KIF2A. Interacts with CYLD. Part of an astrin (SPAG5)-kinastrin (SKAP) complex containing KNSTRN, SPAG5, PLK1, DYNLL1 and SGO2. Interacts with BIRC6/bruce. Interacts with CDK1-phosphorylated FRY; this interaction occurs in mitotic cells, but not in interphase cells. FRY interaction facilitates AURKA-mediated PLK1 phosphorylation. Interacts with CDK1-phosphorylated DCTN6 during mitotic prometaphase; the interaction facilitates recruitment to kinetochores. Interacts with CEP68; the interaction phosphorylates CEP68. Interacts (via POLO-box domain) with DCTN1. Interacts with CEP20 in later G1, S, G2 and M phases of the cell cycle; this interaction recruits PLK1 to centrosomes, a step required for S phase progression. Interacts with KLHL22. Interacts (via POLO box domains) with NEDD9/HEF1 (via C-terminus). Interacts with FIRRM (via N-terminus region); required for maintaining, but not activating, PLK1 kinase activity. Interacts with FZR1. Interacts with SKA3; the interaction promotes the stability of PLK1; the interaction promotes the stability of PLK1. Interacts with the MTMR3:MTMR4 heterooligomer; brings CEP55 and PLK1 together during early mitosis, regulating the phosphorylation of CEP55 by PLK1 and its recruitment to the midbody where it can mediate cell abscission. Post-translationally, catalytic activity is enhanced by phosphorylation of Thr-210. Phosphorylation at Thr-210 is first detected on centrosomes in the G2 phase of the cell cycle, peaks in prometaphase and gradually disappears from centrosomes during anaphase. Dephosphorylation at Thr-210 at centrosomes is probably mediated by protein phosphatase 1C (PP1C), via interaction with PPP1R12A/MYPT1. Autophosphorylation and phosphorylation of Ser-137 may not be significant for the activation of PLK1 during mitosis, but may enhance catalytic activity during recovery after DNA damage checkpoint. Phosphorylated in vitro by STK10. In terms of processing, ubiquitinated by the anaphase promoting complex/cyclosome (APC/C) in anaphase and following DNA damage, leading to its degradation by the proteasome. Ubiquitination is mediated via its interaction with FZR1/CDH1. Ubiquitination and subsequent degradation prevents entry into mitosis and is essential to maintain an efficient G2 DNA damage checkpoint. Monoubiquitination at Lys-492 by the BCR(KLHL22) ubiquitin ligase complex does not lead to degradation: it promotes PLK1 dissociation from phosphoreceptor proteins and subsequent removal from kinetochores, allowing silencing of the spindle assembly checkpoint (SAC) and chromosome segregation. In terms of tissue distribution, placenta and colon.

It is found in the nucleus. Its subcellular location is the chromosome. The protein localises to the centromere. It localises to the kinetochore. The protein resides in the cytoplasm. It is found in the cytoskeleton. Its subcellular location is the microtubule organizing center. The protein localises to the centrosome. It localises to the spindle. The protein resides in the midbody. The catalysed reaction is L-seryl-[protein] + ATP = O-phospho-L-seryl-[protein] + ADP + H(+). It catalyses the reaction L-threonyl-[protein] + ATP = O-phospho-L-threonyl-[protein] + ADP + H(+). With respect to regulation, activated by phosphorylation of Thr-210 by AURKA; phosphorylation by AURKA is enhanced by BORA. Once activated, activity is stimulated by binding target proteins. Binding of target proteins has no effect on the non-activated kinase. Several inhibitors targeting PLKs are currently in development and are under investigation in a growing number of clinical trials, such as BI 2536, an ATP-competitive PLK1 inhibitor or BI 6727, a dihydropteridinone that specifically inhibits the catalytic activity of PLK1. In terms of biological role, serine/threonine-protein kinase that performs several important functions throughout M phase of the cell cycle, including the regulation of centrosome maturation and spindle assembly, the removal of cohesins from chromosome arms, the inactivation of anaphase-promoting complex/cyclosome (APC/C) inhibitors, and the regulation of mitotic exit and cytokinesis. Polo-like kinase proteins act by binding and phosphorylating proteins that are already phosphorylated on a specific motif recognized by the POLO box domains. Phosphorylates BORA, BUB1B/BUBR1, CCNB1, CDC25C, CEP55, ECT2, ERCC6L, FBXO5/EMI1, FOXM1, KIF20A/MKLP2, CENPU, NEDD1, NINL, NPM1, NUDC, PKMYT1/MYT1, KIZ, MRE11, PPP1R12A/MYPT1, POLQ, PRC1, RACGAP1/CYK4, RAD51, RHNO1, SGO1, STAG2/SA2, TEX14, TOPORS, p73/TP73, TPT1, WEE1 and HNRNPU. Plays a key role in centrosome functions and the assembly of bipolar spindles by phosphorylating KIZ, NEDD1 and NINL. NEDD1 phosphorylation promotes subsequent targeting of the gamma-tubulin ring complex (gTuRC) to the centrosome, an important step for spindle formation. Phosphorylation of NINL component of the centrosome leads to NINL dissociation from other centrosomal proteins. Involved in mitosis exit and cytokinesis by phosphorylating CEP55, ECT2, KIF20A/MKLP2, CENPU, PRC1 and RACGAP1. Recruited at the central spindle by phosphorylating and docking PRC1 and KIF20A/MKLP2; creates its own docking sites on PRC1 and KIF20A/MKLP2 by mediating phosphorylation of sites subsequently recognized by the POLO box domains. Phosphorylates RACGAP1, thereby creating a docking site for the Rho GTP exchange factor ECT2 that is essential for the cleavage furrow formation. Promotes the central spindle recruitment of ECT2. Plays a central role in G2/M transition of mitotic cell cycle by phosphorylating CCNB1, CDC25C, FOXM1, CENPU, PKMYT1/MYT1, PPP1R12A/MYPT1 and WEE1. Part of a regulatory circuit that promotes the activation of CDK1 by phosphorylating the positive regulator CDC25C and inhibiting the negative regulators WEE1 and PKMYT1/MYT1. Also acts by mediating phosphorylation of cyclin-B1 (CCNB1) on centrosomes in prophase. Phosphorylates FOXM1, a key mitotic transcription regulator, leading to enhance FOXM1 transcriptional activity. Involved in kinetochore functions and sister chromatid cohesion by phosphorylating BUB1B/BUBR1, FBXO5/EMI1 and STAG2/SA2. PLK1 is high on non-attached kinetochores suggesting a role of PLK1 in kinetochore attachment or in spindle assembly checkpoint (SAC) regulation. Required for kinetochore localization of BUB1B. Regulates the dissociation of cohesin from chromosomes by phosphorylating cohesin subunits such as STAG2/SA2. Phosphorylates SGO1: required for spindle pole localization of isoform 3 of SGO1 and plays a role in regulating its centriole cohesion function. Mediates phosphorylation of FBXO5/EMI1, a negative regulator of the APC/C complex during prophase, leading to FBXO5/EMI1 ubiquitination and degradation by the proteasome. Acts as a negative regulator of p53 family members: phosphorylates TOPORS, leading to inhibit the sumoylation of p53/TP53 and simultaneously enhance the ubiquitination and subsequent degradation of p53/TP53. Phosphorylates the transactivation domain of the transcription factor p73/TP73, leading to inhibit p73/TP73-mediated transcriptional activation and pro-apoptotic functions. Phosphorylates BORA, and thereby promotes the degradation of BORA. Contributes to the regulation of AURKA function. Also required for recovery after DNA damage checkpoint and entry into mitosis. Phosphorylates MISP, leading to stabilization of cortical and astral microtubule attachments required for proper spindle positioning. Together with MEIKIN, acts as a regulator of kinetochore function during meiosis I: required both for mono-orientation of kinetochores on sister chromosomes and protection of centromeric cohesin from separase-mediated cleavage. Phosphorylates CEP68 and is required for its degradation. Regulates nuclear envelope breakdown during prophase by phosphorylating DCTN1 resulting in its localization in the nuclear envelope. Phosphorylates the heat shock transcription factor HSF1, promoting HSF1 nuclear translocation upon heat shock. Phosphorylates HSF1 also in the early mitotic period; this phosphorylation regulates HSF1 localization to the spindle pole, the recruitment of the SCF(BTRC) ubiquitin ligase complex induicing HSF1 degradation, and hence mitotic progression. Regulates mitotic progression by phosphorylating RIOK2. Through the phosphorylation of DZIP1 regulates the localization during mitosis of the BBSome, a ciliary protein complex involved in cilium biogenesis. Regulates DNA repair during mitosis by mediating phosphorylation of POLQ and RHNO1, thereby promoting POLQ recruitment to DNA damage sites. Phosphorylates ATXN10 which may play a role in the regulation of cytokinesis and may stimulate the proteasome-mediated degradation of ATXN10. In Homo sapiens (Human), this protein is Serine/threonine-protein kinase PLK1 (PLK1).